The primary structure comprises 226 residues: Lipoprotein-releasing system ATP-binding protein LolD (226 aa).

The ABC transporter domain occupies 5-226; that stretch reads LKATNINKIY…LLRNGHWENY (222 aa). 41–48 is a binding site for ATP; the sequence is GTSGSGKS.

Belongs to the ABC transporter superfamily. Lipoprotein translocase (TC 3.A.1.125) family. The complex is composed of two ATP-binding proteins (LolD) and two transmembrane proteins (LolC and LolE).

The protein resides in the cell inner membrane. Functionally, part of the ABC transporter complex LolCDE involved in the translocation of mature outer membrane-directed lipoproteins, from the inner membrane to the periplasmic chaperone, LolA. Responsible for the formation of the LolA-lipoprotein complex in an ATP-dependent manner. The chain is Lipoprotein-releasing system ATP-binding protein LolD from Psychrobacter arcticus (strain DSM 17307 / VKM B-2377 / 273-4).